The chain runs to 57 residues: Cold shock protein CspB (57 aa).

Residues 1–57 enclose the CSD domain; sequence IKWFNSEKGFGFIEVEGQDDVFVHFSAIQGEGFKCLEEGQAVSFEIVEGNRGPQAAN.

Homodimer.

It is found in the cytoplasm. Affects cell viability at low temperatures. The polypeptide is Cold shock protein CspB (cspB) (Sporosarcina globispora (Bacillus globisporus)).